The following is a 26-amino-acid chain: MEHSHWFRKMSSLHQEFVCFLFWPLT.

This is an uncharacterized protein from Saccharomyces cerevisiae (strain ATCC 204508 / S288c) (Baker's yeast).